The chain runs to 291 residues: Shikimate dehydrogenase (NADP(+)) (291 aa).

Residues serine 26–serine 28 and serine 73 each bind shikimate. Lysine 77 serves as the catalytic Proton acceptor. Shikimate contacts are provided by asparagine 98 and aspartate 113. NADP(+)-binding positions include glycine 137–alanine 141 and valine 238. Tyrosine 240 is a binding site for shikimate. Residue glycine 261 coordinates NADP(+).

It belongs to the shikimate dehydrogenase family. In terms of assembly, homodimer.

It catalyses the reaction shikimate + NADP(+) = 3-dehydroshikimate + NADPH + H(+). The protein operates within metabolic intermediate biosynthesis; chorismate biosynthesis; chorismate from D-erythrose 4-phosphate and phosphoenolpyruvate: step 4/7. Its function is as follows. Involved in the biosynthesis of the chorismate, which leads to the biosynthesis of aromatic amino acids. Catalyzes the reversible NADPH linked reduction of 3-dehydroshikimate (DHSA) to yield shikimate (SA). The polypeptide is Shikimate dehydrogenase (NADP(+)) (Listeria monocytogenes serotype 4b (strain F2365)).